A 39-amino-acid polypeptide reads, in one-letter code: Large ribosomal subunit protein bL36 (39 aa).

Belongs to the bacterial ribosomal protein bL36 family.

The polypeptide is Large ribosomal subunit protein bL36 (Lactiplantibacillus plantarum (strain ATCC BAA-793 / NCIMB 8826 / WCFS1) (Lactobacillus plantarum)).